A 179-amino-acid polypeptide reads, in one-letter code: Large ribosomal subunit protein uL5 (179 aa).

The protein belongs to the universal ribosomal protein uL5 family. As to quaternary structure, part of the 50S ribosomal subunit; part of the 5S rRNA/L5/L18/L25 subcomplex. Contacts the 5S rRNA and the P site tRNA. Forms a bridge to the 30S subunit in the 70S ribosome.

Its function is as follows. This is one of the proteins that bind and probably mediate the attachment of the 5S RNA into the large ribosomal subunit, where it forms part of the central protuberance. In the 70S ribosome it contacts protein S13 of the 30S subunit (bridge B1b), connecting the 2 subunits; this bridge is implicated in subunit movement. Contacts the P site tRNA; the 5S rRNA and some of its associated proteins might help stabilize positioning of ribosome-bound tRNAs. In Shouchella clausii (strain KSM-K16) (Alkalihalobacillus clausii), this protein is Large ribosomal subunit protein uL5.